Consider the following 150-residue polypeptide: Phosphoribosyl-AMP cyclohydrolase (150 aa).

Position 92 (Asp92) interacts with Mg(2+). Cys93 contacts Zn(2+). Mg(2+) is bound by residues Asp94 and Asp96. Residues Cys111 and Cys118 each contribute to the Zn(2+) site.

Belongs to the PRA-CH family. Homodimer. Mg(2+) is required as a cofactor. It depends on Zn(2+) as a cofactor.

The protein resides in the cytoplasm. The catalysed reaction is 1-(5-phospho-beta-D-ribosyl)-5'-AMP + H2O = 1-(5-phospho-beta-D-ribosyl)-5-[(5-phospho-beta-D-ribosylamino)methylideneamino]imidazole-4-carboxamide. It functions in the pathway amino-acid biosynthesis; L-histidine biosynthesis; L-histidine from 5-phospho-alpha-D-ribose 1-diphosphate: step 3/9. Functionally, catalyzes the hydrolysis of the adenine ring of phosphoribosyl-AMP. This chain is Phosphoribosyl-AMP cyclohydrolase, found in Agrobacterium fabrum (strain C58 / ATCC 33970) (Agrobacterium tumefaciens (strain C58)).